Consider the following 305-residue polypeptide: UDP-3-O-acyl-N-acetylglucosamine deacetylase (305 aa).

Zn(2+)-binding residues include H78, H237, and D241. H264 (proton donor) is an active-site residue.

Belongs to the LpxC family. It depends on Zn(2+) as a cofactor.

It carries out the reaction a UDP-3-O-[(3R)-3-hydroxyacyl]-N-acetyl-alpha-D-glucosamine + H2O = a UDP-3-O-[(3R)-3-hydroxyacyl]-alpha-D-glucosamine + acetate. The protein operates within glycolipid biosynthesis; lipid IV(A) biosynthesis; lipid IV(A) from (3R)-3-hydroxytetradecanoyl-[acyl-carrier-protein] and UDP-N-acetyl-alpha-D-glucosamine: step 2/6. Functionally, catalyzes the hydrolysis of UDP-3-O-myristoyl-N-acetylglucosamine to form UDP-3-O-myristoylglucosamine and acetate, the committed step in lipid A biosynthesis. The chain is UDP-3-O-acyl-N-acetylglucosamine deacetylase from Cupriavidus taiwanensis (strain DSM 17343 / BCRC 17206 / CCUG 44338 / CIP 107171 / LMG 19424 / R1) (Ralstonia taiwanensis (strain LMG 19424)).